A 344-amino-acid chain; its full sequence is Meiotically up-regulated gene 10 protein (344 aa).

Residues 48-207 (EFNSILQEII…RELCSYIDQE (160 aa)) form the DH domain.

The protein localises to the cytoplasm. Its subcellular location is the nucleus. Its function is as follows. Has a role in meiosis. The sequence is that of Meiotically up-regulated gene 10 protein (mug10) from Schizosaccharomyces pombe (strain 972 / ATCC 24843) (Fission yeast).